Reading from the N-terminus, the 363-residue chain is UDP-3-O-acylglucosamine N-acyltransferase (363 aa).

Catalysis depends on H259, which acts as the Proton acceptor.

The protein belongs to the transferase hexapeptide repeat family. LpxD subfamily. Homotrimer.

The enzyme catalyses a UDP-3-O-[(3R)-3-hydroxyacyl]-alpha-D-glucosamine + a (3R)-hydroxyacyl-[ACP] = a UDP-2-N,3-O-bis[(3R)-3-hydroxyacyl]-alpha-D-glucosamine + holo-[ACP] + H(+). The protein operates within bacterial outer membrane biogenesis; LPS lipid A biosynthesis. Its function is as follows. Catalyzes the N-acylation of UDP-3-O-acylglucosamine using 3-hydroxyacyl-ACP as the acyl donor. Is involved in the biosynthesis of lipid A, a phosphorylated glycolipid that anchors the lipopolysaccharide to the outer membrane of the cell. The sequence is that of UDP-3-O-acylglucosamine N-acyltransferase from Ruegeria pomeroyi (strain ATCC 700808 / DSM 15171 / DSS-3) (Silicibacter pomeroyi).